The sequence spans 412 residues: 1-deoxy-D-xylulose 5-phosphate reductoisomerase (412 aa).

8 residues coordinate NADPH: Thr-10, Gly-11, Ser-12, Ile-13, Gly-36, Lys-37, Asn-38, and Asn-130. 1-deoxy-D-xylulose 5-phosphate is bound at residue Lys-131. Glu-132 is an NADPH binding site. Residue Asp-156 coordinates Mn(2+). 4 residues coordinate 1-deoxy-D-xylulose 5-phosphate: Ser-157, Glu-158, Ser-194, and His-217. Mn(2+) is bound at residue Glu-158. NADPH is bound at residue Gly-223. The 1-deoxy-D-xylulose 5-phosphate site is built by Ser-230, Asn-235, Lys-236, and Glu-239. Residue Glu-239 participates in Mn(2+) binding.

Belongs to the DXR family. Requires Mg(2+) as cofactor. Mn(2+) is required as a cofactor.

The enzyme catalyses 2-C-methyl-D-erythritol 4-phosphate + NADP(+) = 1-deoxy-D-xylulose 5-phosphate + NADPH + H(+). It participates in isoprenoid biosynthesis; isopentenyl diphosphate biosynthesis via DXP pathway; isopentenyl diphosphate from 1-deoxy-D-xylulose 5-phosphate: step 1/6. In terms of biological role, catalyzes the NADPH-dependent rearrangement and reduction of 1-deoxy-D-xylulose-5-phosphate (DXP) to 2-C-methyl-D-erythritol 4-phosphate (MEP). The sequence is that of 1-deoxy-D-xylulose 5-phosphate reductoisomerase from Prochlorococcus marinus (strain NATL1A).